We begin with the raw amino-acid sequence, 527 residues long: Protein PyrBI (527 aa).

Residues 1–342 (MKRDFLGRTL…MFGGALEAPF (342 aa)) are aspartate carbamoyltransferase. The interval 343–357 (DTSKKEEKPEEDFII) is linker. Residues 368 to 527 (VQKEGKRGIK…PHSFEEIWSI (160 aa)) form an aspartate carbamoyltransferase regulatory region region. Cysteine 483, cysteine 488, cysteine 512, and cysteine 515 together coordinate Zn(2+).

The protein in the N-terminal section; belongs to the aspartate/ornithine carbamoyltransferase superfamily. ATCase family. This sequence in the C-terminal section; belongs to the PyrI family.

It catalyses the reaction carbamoyl phosphate + L-aspartate = N-carbamoyl-L-aspartate + phosphate + H(+). Its pathway is pyrimidine metabolism; UMP biosynthesis via de novo pathway; (S)-dihydroorotate from bicarbonate: step 2/3. This Thermotoga maritima (strain ATCC 43589 / DSM 3109 / JCM 10099 / NBRC 100826 / MSB8) protein is Protein PyrBI (pyrBI).